The following is a 511-amino-acid chain: 2,3-bisphosphoglycerate-independent phosphoglycerate mutase (511 aa).

2 residues coordinate Mn(2+): Asp-14 and Ser-64. Residue Ser-64 is the Phosphoserine intermediate of the active site. Residues His-125, 155–156 (RD), Arg-187, Arg-193, 259–262 (RADR), and Lys-333 each bind substrate. Mn(2+)-binding residues include Asp-400, His-404, Asp-441, His-442, and His-460.

The protein belongs to the BPG-independent phosphoglycerate mutase family. Monomer. Requires Mn(2+) as cofactor.

It carries out the reaction (2R)-2-phosphoglycerate = (2R)-3-phosphoglycerate. Its pathway is carbohydrate degradation; glycolysis; pyruvate from D-glyceraldehyde 3-phosphate: step 3/5. Functionally, catalyzes the interconversion of 2-phosphoglycerate and 3-phosphoglycerate. This chain is 2,3-bisphosphoglycerate-independent phosphoglycerate mutase, found in Pseudomonas putida (strain ATCC 47054 / DSM 6125 / CFBP 8728 / NCIMB 11950 / KT2440).